We begin with the raw amino-acid sequence, 205 residues long: CASP-like protein 0U1 (205 aa).

Residues 1–66 are Cytoplasmic-facing; that stretch reads MSGGDIDPTA…GYHKFAVFQF (66 aa). An MARVEL domain is found at 10-162; the sequence is AINSPKFRLI…SMMFTWKEWR (153 aa). Residues 67–87 form a helical membrane-spanning segment; that stretch reads LVVICVTYWLFTMLWMGMYLI. At 88-90 the chain is on the extracellular side; sequence QKV. Residues 91–111 traverse the membrane as a helical segment; it reads PPAGTEFMIYAVFNVLILIAF. Residues 112-137 are Cytoplasmic-facing; it reads STSWTECNETIVDPTYPVCKRATGAK. The chain crosses the membrane as a helical span at residues 138–158; it reads ASIAFAMFTWLALCVSMMFTW. Over 159-167 the chain is Extracellular; that stretch reads KEWRDQNYE. A helical transmembrane segment spans residues 168 to 188; the sequence is GLPIFGDFSSFMPGGGGGGMG. The Cytoplasmic portion of the chain corresponds to 189–205; that stretch reads GGGGYERPSDVNTQTYA.

It belongs to the Casparian strip membrane proteins (CASP) family. Homodimer and heterodimers.

Its subcellular location is the cell membrane. In Micromonas pusilla (strain CCMP1545) (Picoplanktonic green alga), this protein is CASP-like protein 0U1.